Consider the following 1010-residue polypeptide: MEGFAKPSTSSGSGVTVRASVAAASIEERFADLCKAKLGLDESTTRQAMQLLKETNNILKSSMSSLGGGSPEEIERFWSACVLYCVSRLSKAGRSKEDGSVSLCQILRASKLNIVDFFKEMPQFCIKVAHILTGLYGSDWEKRLELKELQANVVHLSLLSSYYKRAYQELFLSNDGKSSDNSSESNNQEASDYYRFGWLLFLVLRIQTFSRFKDLVTSTNELVSVLAVLIIHVPVRLRNFDIKDSSYFGKKSDRGVSLIASLCEKHHTSEDELSKALEKTNTLIMDILKKKPCPATSACQQDNLSFIDPEGLTVFKDLLQGDSLKPSLIILEKEYENAINTKGELDERMFANDEDSLLGSGSLSGGAINLPGTKRKYDVMASPAKSISSPNPMSPPRFCLSPKGNGFCNSKMAPSTPVSTAMTTAKWLRNTVSPLPSRPSGELLRFFSACDKDLTDDIAHRAGIILGAIFTSSSFGERICTSMRSASRMDAIWTEQRKMEALKLYYRVLESMCRAESQILSGNNLTSLLSNERFHRCMIACSAELVLATHKTVTMMFPAVLEKTGITAFDLSKVIEGFVRHEDTLPRELKRHLNSLEERLLESMAWEKGSSMYNSLIVARPALSVEISRLGLLAEPMPSLDAIAAHHNISLGGLPPLPFQKQERLQDKDEVRSPKRACTERRNVLVDSNSLRSPVKDIIKPKLPPLQSAFASPTRPNPAAGGETCAETGIGVFFSKISKLAAIRIRSLCERLQLPQQVLERVYSLVQQILSQQTGLFFNRHIDQIILCSIYGVAKISQLELSFKEIIFGYRKQPQCKPQVFRSVYVHWPPRSRNGKTGEDHVDIITFYNEVFIPAVKSLLVEVGPGASASPKKKEEEKGPADVGPFPESPRLARFPNLPDMSPKKVSATHNVYVSPLRSSKMDTLLSPSSKSYYACVGESTYAFQSPSKDLKAINNRLNSVSGGKKVSGRLNFDVVSDLVVASSLGSDRDAKPAADPAKTTPVKCEPSDS.

A domain A region spans residues 416-616 (TPVSTAMTTA…EKGSSMYNSL (201 aa)). The interval 416–858 (TPVSTAMTTA…NEVFIPAVKS (443 aa)) is pocket. The tract at residues 617–727 (IVARPALSVE…PAAGGETCAE (111 aa)) is spacer. The segment at 728 to 858 (TGIGVFFSKI…NEVFIPAVKS (131 aa)) is domain B. Disordered stretches follow at residues 867 to 889 (ASASPKKKEEEKGPADVGPFPES) and 986 to 1010 (GSDRDAKPAADPAKTTPVKCEPSDS).

The protein belongs to the retinoblastoma protein (RB) family.

It is found in the nucleus. Regulator of biological processes that recruits a histone deacetylase to control gene transcription. May play a role in the entry into mitosis, negatively regulating the cell proliferation. Formation of stable complexes with geminiviridae replication-associated proteins may create a cellular environment which favors viral DNA replication. The sequence is that of Retinoblastoma-related protein 3 (RBR3) from Zea mays (Maize).